The primary structure comprises 297 residues: Guanylate kinase (297 aa).

Positions 5 to 184 (GKVIIISGPS…AVSKITDILI (180 aa)) constitute a Guanylate kinase-like domain. 12–19 (GPSGVGKG) lines the ATP pocket. Residues 205–297 (ENIVDQKYTY…IKQRSDFSGD (93 aa)) form a unknown region.

The protein belongs to the guanylate kinase family.

The protein resides in the cytoplasm. The catalysed reaction is GMP + ATP = GDP + ADP. Functionally, essential for recycling GMP and indirectly, cGMP. This is Guanylate kinase (gmk) from Mesoplasma florum (strain ATCC 33453 / NBRC 100688 / NCTC 11704 / L1) (Acholeplasma florum).